Here is a 416-residue protein sequence, read N- to C-terminus: Maltoporin (416 aa).

The N-terminal stretch at 1-26 is a signal peptide; the sequence is MELTMKKVSVIAAAVAATLAAGSAFA.

Belongs to the porin LamB (TC 1.B.3) family. As to quaternary structure, homotrimer formed of three 18-stranded antiparallel beta-barrels, containing three independent channels.

The protein localises to the cell outer membrane. The catalysed reaction is beta-maltose(in) = beta-maltose(out). In terms of biological role, involved in the transport of maltose and maltodextrins. In Vibrio cholerae serotype O1 (strain ATCC 39541 / Classical Ogawa 395 / O395), this protein is Maltoporin.